The primary structure comprises 400 residues: MMNVHPVKGPVATGGERPHEADHPTSLVASFGADQPLRLDCGVDLAPFQIAYQTYGTLNADKSNAILVCHALTMDQHIANVHPITGKPGGWLTLVGPGKPIDTDRYFVICSNVIGSCMGSTGPASTNPATGKVWGLDFPVITIPDMVRAQAMLVDRLGIDKLFCVVGGSMGGMQVLQWSVAYPERVFSAMPIACATRHSAQNIAFHELGRQAVMADPDWAHGRYVETGAHPHRGLAVARMAAHITYLSDAALHRKFGRRMQDRELPTFSFDADFQVESYLRYQGSSFVERFDANSYLYLTRAMDYFDIAADHHGVLAAAFRGTQTRFCVVSFTSDWLFPTPESRAIVHALNAGGARVSFAEVETDKGHDAFLLDEPEFIDIARAFLHSAATARGLDKAGR.

The disordered stretch occupies residues 1–22; it reads MMNVHPVKGPVATGGERPHEAD. One can recognise an AB hydrolase-1 domain in the interval 64-374; that stretch reads NAILVCHALT…DKGHDAFLLD (311 aa). The Nucleophile role is filled by Ser-169. Substrate is bound at residue Arg-239. Residues Asp-335 and His-368 contribute to the active site. Asp-369 serves as a coordination point for substrate.

The protein belongs to the AB hydrolase superfamily. MetX family. Homodimer.

The protein localises to the cytoplasm. The enzyme catalyses L-homoserine + acetyl-CoA = O-acetyl-L-homoserine + CoA. It functions in the pathway amino-acid biosynthesis; L-methionine biosynthesis via de novo pathway; O-acetyl-L-homoserine from L-homoserine: step 1/1. In terms of biological role, transfers an acetyl group from acetyl-CoA to L-homoserine, forming acetyl-L-homoserine. The protein is Homoserine O-acetyltransferase of Rhodopseudomonas palustris (strain HaA2).